The primary structure comprises 407 residues: Peptidase T (407 aa).

His-82 serves as a coordination point for Zn(2+). Asp-84 is an active-site residue. Residue Asp-143 coordinates Zn(2+). Glu-177 functions as the Proton acceptor in the catalytic mechanism. Positions 178, 200, and 382 each coordinate Zn(2+).

Belongs to the peptidase M20B family. It depends on Zn(2+) as a cofactor.

The protein resides in the cytoplasm. The enzyme catalyses Release of the N-terminal residue from a tripeptide.. In terms of biological role, cleaves the N-terminal amino acid of tripeptides. This Streptococcus pyogenes serotype M2 (strain MGAS10270) protein is Peptidase T.